Consider the following 321-residue polypeptide: Olfactory receptor 51G1 (321 aa).

Residues 1–27 (MTILLNSSLQRATFFLTGFQGLEGLHG) lie on the Extracellular side of the membrane. Asn-6 is a glycosylation site (N-linked (GlcNAc...) asparagine). A helical membrane pass occupies residues 28–48 (WISIPFCFIYLTVILGNLTIL). The Cytoplasmic segment spans residues 49–56 (HVICTDAT). A helical membrane pass occupies residues 57 to 77 (LHGPMYYFLGMLAVTDLGLCL). Topologically, residues 78–101 (STLPTVLGIFWFDTREIGIPACFT) are extracellular. Cys-99 and Cys-191 are disulfide-bonded. Residues 102–122 (QLFFIHTLSSMESSVLLSMSI) traverse the membrane as a helical segment. Over 123–141 (DRYVAVCNPLHDSTVLTPA) the chain is Cytoplasmic. A helical transmembrane segment spans residues 142–162 (CIVKMGLSSVLRSALLILPLP). At 163-198 (FLLKRFQYCHSHVLAHAYCLHLEIMKLACSSIIVNH) the chain is on the extracellular side. Residues 199-219 (IYGLFVVACTVGVDSLLIFLS) form a helical membrane-spanning segment. Topologically, residues 220 to 239 (YALILRTVLSIASHQERLRA) are cytoplasmic. A helical transmembrane segment spans residues 240-260 (LNTCVSHICAVLLFYIPMIGL). The Extracellular segment spans residues 261 to 275 (SLVHRFGEHLPRVVH). The chain crosses the membrane as a helical span at residues 276-296 (LFMSYVYLLVPPLMNPIIYSI). At 297-321 (KTKQIRQRIIKKFQFIKSLRCFWKD) the chain is on the cytoplasmic side.

The protein belongs to the G-protein coupled receptor 1 family.

It localises to the cell membrane. Odorant receptor. In Homo sapiens (Human), this protein is Olfactory receptor 51G1 (OR51G1).